Here is an 814-residue protein sequence, read N- to C-terminus: Leucine-rich repeat-containing protein 41 (814 aa).

Residues alanine 45 to valine 54 are interaction with Elongin BC complex. Phosphoserine is present on residues serine 155, serine 276, and serine 326. Positions leucine 265 to cysteine 408 are disordered. At threonine 327 the chain carries Phosphothreonine. Positions threonine 354 to proline 385 are enriched in low complexity. A Phosphoserine modification is found at serine 375. Positions proline 389 to arginine 403 are enriched in basic residues. 7 LRR repeats span residues tryptophan 489–leucine 509, alanine 520–leucine 532, phenylalanine 533–isoleucine 557, serine 615–valine 637, leucine 638–cysteine 661, asparagine 703–glutamate 730, and serine 733–phenylalanine 754.

In terms of assembly, part of a E3 ubiquitin ligase complex with elongin BC complex (ELOB and ELOC), RBX1 and CUL5.

The chain is Leucine-rich repeat-containing protein 41 (LRRC41) from Bos taurus (Bovine).